The chain runs to 128 residues: Small ribosomal subunit protein bS6 (128 aa).

Residues Ser-100–Glu-128 are disordered. The span at Lys-104–Ala-121 shows a compositional bias: basic and acidic residues.

The protein belongs to the bacterial ribosomal protein bS6 family.

Binds together with bS18 to 16S ribosomal RNA. The chain is Small ribosomal subunit protein bS6 from Aeromonas hydrophila subsp. hydrophila (strain ATCC 7966 / DSM 30187 / BCRC 13018 / CCUG 14551 / JCM 1027 / KCTC 2358 / NCIMB 9240 / NCTC 8049).